We begin with the raw amino-acid sequence, 1234 residues long: Chromosome-associated kinesin KIF4B (1234 aa).

The Kinesin motor domain maps to 9–336 (PVRVALRCRP…LRYADRARKI (328 aa)). 88-95 (GQTGSGKT) contacts ATP. The stretch at 350 to 999 (ELNHLKQQVQ…IKQKLILLQV (650 aa)) forms a coiled coil. A Phosphoserine modification is found at Ser-394. Disordered stretches follow at residues 494–513 (EEAQ…AFTT) and 712–737 (KRLK…HGKE). A compositionally biased stretch (polar residues) spans 498–513 (VETSPETSRSSDAFTT). The segment at 663–1234 (QWKQKKDKEV…GCSPIEEEAH (572 aa)) is interaction with PRC1. Positions 713-737 (RLKDALQKQREVTDKRKETQSHGKE) are enriched in basic and acidic residues. Positions 793–798 (PKLRKC) match the Nuclear localization signal motif. Thr-799 is modified (phosphothreonine). Residues Ser-801, Ser-951, Ser-1001, Ser-1013, Ser-1017, and Ser-1028 each carry the phosphoserine modification. The segment at 1000–1234 (ASRQKHLPND…GCSPIEEEAH (235 aa)) is globular. 4 disordered regions span residues 1007-1030 (PNDT…PSRV), 1052-1076 (VNEH…KPTK), 1122-1143 (RQQG…GSFK), and 1183-1234 (TAPA…EEAH). A compositionally biased stretch (acidic residues) spans 1056-1071 (EDGDGDGDSDEGDDEE). A CRD; required for [4Fe-4S] cluster binding and localization to the spindle midzone and midbody during anaphase and telophase region spans residues 1086-1144 (QGCSCKGWCGNKQCGCRKQKSDCGVDCSCDPTKCRNRQQGKDSLGTVEQTQDSEGSFKL). Ser-1128 carries the phosphoserine modification. A Phosphothreonine modification is found at Thr-1183. Ser-1188 carries the post-translational modification Phosphoserine. Lys-1196 is covalently cross-linked (Glycyl lysine isopeptide (Lys-Gly) (interchain with G-Cter in SUMO2)). Ser-1227 is subject to Phosphoserine.

It belongs to the TRAFAC class myosin-kinesin ATPase superfamily. Kinesin family. Chromokinesin subfamily. [2Fe-2S] cluster is required as a cofactor. [4Fe-4S] cluster serves as cofactor. In terms of tissue distribution, specifically expressed in testis.

It localises to the nucleus matrix. The protein localises to the cytoplasm. It is found in the cytoskeleton. Its function is as follows. Iron-sulfur (Fe-S) cluster binding motor protein that has a role in chromosome segregation during mitosis. Translocates PRC1 to the plus ends of interdigitating spindle microtubules during the metaphase to anaphase transition, an essential step for the formation of an organized central spindle midzone and midbody and for successful cytokinesis. May play a role in mitotic chromosomal positioning and bipolar spindle stabilization. The protein is Chromosome-associated kinesin KIF4B (KIF4B) of Homo sapiens (Human).